A 150-amino-acid chain; its full sequence is Large ribosomal subunit protein bL9 (150 aa).

It belongs to the bacterial ribosomal protein bL9 family.

Binds to the 23S rRNA. In Streptococcus pyogenes serotype M18 (strain MGAS8232), this protein is Large ribosomal subunit protein bL9.